Here is a 206-residue protein sequence, read N- to C-terminus: FMN-dependent NADH:quinone oxidoreductase 1 (206 aa).

FMN-binding positions include Ser10 and Ser16–Ser18.

Belongs to the azoreductase type 1 family. In terms of assembly, homodimer. It depends on FMN as a cofactor.

The catalysed reaction is 2 a quinone + NADH + H(+) = 2 a 1,4-benzosemiquinone + NAD(+). The enzyme catalyses N,N-dimethyl-1,4-phenylenediamine + anthranilate + 2 NAD(+) = 2-(4-dimethylaminophenyl)diazenylbenzoate + 2 NADH + 2 H(+). Functionally, quinone reductase that provides resistance to thiol-specific stress caused by electrophilic quinones. In terms of biological role, also exhibits azoreductase activity. Catalyzes the reductive cleavage of the azo bond in aromatic azo compounds to the corresponding amines. The polypeptide is FMN-dependent NADH:quinone oxidoreductase 1 (Burkholderia lata (strain ATCC 17760 / DSM 23089 / LMG 22485 / NCIMB 9086 / R18194 / 383)).